Reading from the N-terminus, the 94-residue chain is Cyclin-dependent kinases regulatory subunit (94 aa).

It belongs to the CKS family. Forms a homohexamer that can probably bind six kinase subunits. Interacts with cdk-1.

It localises to the nucleus. Binds to the catalytic subunit of the cyclin dependent kinases and is essential for their biological function. Has a role in the exit from M phase during early mitotic cell division. More specifically, thought to act by the degrading B-type cyclins that causes breakdown of nuclear envelope and exit mitosis. The sequence is that of Cyclin-dependent kinases regulatory subunit from Caenorhabditis briggsae.